The primary structure comprises 157 residues: ATP synthase subunit b' (157 aa).

A helical transmembrane segment spans residues 22-42; it reads ATLPLIAIQFLLLVAVLNSLF.

The protein belongs to the ATPase B chain family. As to quaternary structure, F-type ATPases have 2 components, F(1) - the catalytic core - and F(0) - the membrane proton channel. F(1) has five subunits: alpha(3), beta(3), gamma(1), delta(1), epsilon(1). F(0) has four main subunits: a(1), b(1), b'(1) and c(10-14). The alpha and beta chains form an alternating ring which encloses part of the gamma chain. F(1) is attached to F(0) by a central stalk formed by the gamma and epsilon chains, while a peripheral stalk is formed by the delta, b and b' chains.

It is found in the cellular thylakoid membrane. Functionally, f(1)F(0) ATP synthase produces ATP from ADP in the presence of a proton or sodium gradient. F-type ATPases consist of two structural domains, F(1) containing the extramembraneous catalytic core and F(0) containing the membrane proton channel, linked together by a central stalk and a peripheral stalk. During catalysis, ATP synthesis in the catalytic domain of F(1) is coupled via a rotary mechanism of the central stalk subunits to proton translocation. Component of the F(0) channel, it forms part of the peripheral stalk, linking F(1) to F(0). The b'-subunit is a diverged and duplicated form of b found in plants and photosynthetic bacteria. The sequence is that of ATP synthase subunit b' from Synechococcus sp. (strain JA-2-3B'a(2-13)) (Cyanobacteria bacterium Yellowstone B-Prime).